The following is a 318-amino-acid chain: Isoflavone reductase (318 aa).

NADP(+) is bound by residues 11–17, Arg-36, and Lys-44; that span reads GPTGAIG. The active-site Proton acceptor is Lys-144. Arg-148 provides a ligand contact to NADP(+).

This sequence belongs to the NmrA-type oxidoreductase family. Isoflavone reductase subfamily.

The catalysed reaction is (3R)-vestitone + NADP(+) = 2'-hydroxyformononetin + NADPH + 2 H(+). Its pathway is phytoalexin biosynthesis; pterocarpan phytoalexin biosynthesis. In terms of biological role, reduces achiral isoflavones to chiral isoflavanones during the biosynthesis of chiral pterocarpan phytoalexins. The sequence is that of Isoflavone reductase (IFR) from Cicer arietinum (Chickpea).